A 249-amino-acid chain; its full sequence is MISLMQLQDVAETTRLGPLSGDVKPGEILHLVGPNGAGKSTLLARMAGLTFGEGTVIFDGASLETWPAAKLAQHRAYLAQQQNPPFSMPVWHFLTLHQPDKTQTNLLNDVAQALGLSDKLGRSANQLSGGEWQRVRLAAVILQIHPHANPHGQLLLLDEPMNSLDVAQQNALDRLLSQLCSQGIAIVMSSHDLNHTLRHAHRAWLLKQGKLIASGRRDEVLTPPNLAQAYGMNFRRLDVEGHRMLISTT.

Residues 5–233 (MQLQDVAETT…PNLAQAYGMN (229 aa)) enclose the ABC transporter domain. Residue 33–40 (GPNGAGKS) participates in ATP binding.

It belongs to the ABC transporter superfamily. Vitamin B12 importer (TC 3.A.1.13.1) family. In terms of assembly, the complex is composed of two ATP-binding proteins (BtuD), two transmembrane proteins (BtuC) and a solute-binding protein (BtuF).

Its subcellular location is the cell inner membrane. The enzyme catalyses an R-cob(III)alamin(out) + ATP + H2O = an R-cob(III)alamin(in) + ADP + phosphate + H(+). Functionally, part of the ABC transporter complex BtuCDF involved in vitamin B12 import. Responsible for energy coupling to the transport system. The chain is Vitamin B12 import ATP-binding protein BtuD from Citrobacter koseri (strain ATCC BAA-895 / CDC 4225-83 / SGSC4696).